Consider the following 135-residue polypeptide: MASLRPLVKPKIIKKWTKKFIRHQSDRYVKIKRNWRKPRGIDNRVRRRFKGQILMPNIGYGSNKKTKHMLPSGFRKFLVHSVKELEVLLMCNKSYCAKIAHNVSSKNCKAIVERVAQLAIRVTNPNARLRSEENE.

Lys-9 is covalently cross-linked (Glycyl lysine isopeptide (Lys-Gly) (interchain with G-Cter in SUMO2)). The residue at position 50 (Lys-50) is an N6-succinyllysine. At Ser-62 the chain carries Phosphoserine.

It belongs to the eukaryotic ribosomal protein eL32 family. In terms of assembly, component of the large ribosomal subunit.

It is found in the cytoplasm. Component of the large ribosomal subunit. The ribosome is a large ribonucleoprotein complex responsible for the synthesis of proteins in the cell. The sequence is that of Large ribosomal subunit protein eL32 (RPL32) from Oryctolagus cuniculus (Rabbit).